The primary structure comprises 930 residues: Serine/threonine-protein kinase ATG1 (930 aa).

Positions 23 to 326 (FIIDREIGKG…FENFFAHHVV (304 aa)) constitute a Protein kinase domain. Residues 29–37 (IGKGSFAQV) and Lys-52 contribute to the ATP site. Asp-166 functions as the Proton acceptor in the catalytic mechanism. 4 disordered regions span residues 336 to 468 (DDIP…TEEE), 504 to 563 (GQNN…SASP), 853 to 874 (ISSG…DTEE), and 904 to 930 (NQAK…YGST). The span at 337-350 (DIPKPPKRELETIR) shows a compositional bias: basic and acidic residues. Over residues 377 to 393 (SPKSPRSSPRSSTVNSS) the composition is skewed to low complexity. Composition is skewed to polar residues over residues 400–417 (RQSQ…HNSG) and 504–531 (GQNN…TTGA). Residues 629–897 (AAQAIEEFAT…RLNMVRKKQQ (269 aa)) form an ATG13-binding region.

Belongs to the protein kinase superfamily. Ser/Thr protein kinase family. APG1/unc-51/ULK1 subfamily. Homodimer. Dimerization requires the presence of ATG13. Forms a ternary complex with ATG13 and ATG17.

Its subcellular location is the cytoplasm. It localises to the preautophagosomal structure membrane. It catalyses the reaction L-seryl-[protein] + ATP = O-phospho-L-seryl-[protein] + ADP + H(+). It carries out the reaction L-threonyl-[protein] + ATP = O-phospho-L-threonyl-[protein] + ADP + H(+). Functionally, serine/threonine protein kinase involved in the cytoplasm to vacuole transport (Cvt) and found to be essential in autophagy, where it is required for the formation of autophagosomes. Involved in the clearance of protein aggregates which cannot be efficiently cleared by the proteasome. Required for selective autophagic degradation of the nucleus (nucleophagy) as well as for mitophagy which contributes to regulate mitochondrial quantity and quality by eliminating the mitochondria to a basal level to fulfill cellular energy requirements and preventing excess ROS production. Also involved in endoplasmic reticulum-specific autophagic process, in selective removal of ER-associated degradation (ERAD) substrates. Plays a key role in ATG9 and ATG23 cycling through the pre-autophagosomal structure and is necessary to promote ATG18 binding to ATG9 through phosphorylation of ATG9. Catalyzes phosphorylation of ATG4, decreasing the interaction between ATG4 and ATG8 and impairing deconjugation of PE-conjugated forms of ATG8. Contributes to conidiation by regulating the conidial levels of the conidiation-related protein CP15 and mediates fungal oxidation resistance by controlling total superoxide dismutase (SOD) activity. The sequence is that of Serine/threonine-protein kinase ATG1 from Beauveria bassiana (strain ARSEF 2860) (White muscardine disease fungus).